A 157-amino-acid chain; its full sequence is UPF0756 membrane protein ABC2716 (157 aa).

Transmembrane regions (helical) follow at residues 8–28 (FLLL…IIAI), 54–74 (LGVT…DIGF), 84–104 (LYAW…ASGI), and 117–137 (LVLG…GPLI).

It belongs to the UPF0756 family.

The protein resides in the cell membrane. This is UPF0756 membrane protein ABC2716 from Shouchella clausii (strain KSM-K16) (Alkalihalobacillus clausii).